The sequence spans 601 residues: Zinc finger CCCH domain-containing protein 33 (601 aa).

2 ANK repeats span residues 71-101 and 106-138; these read ERRTAAMVAALYGSTGVLGYVVAAAPAEAAR and DGATPLHMAAAGGAANAVAATRLLLAAGASVDA. Residues 167–180 show a composition bias toward low complexity; sequence PAVSPSSSPKKSAS. Residues 167-203 form a disordered region; that stretch reads PAVSPSSSPKKSASPPSPPPPQEAKKEYPPDLTLPDL. C3H1-type zinc fingers lie at residues 252 to 280 and 288 to 312; these read SYSCVPCPEFRKGGSCRKGDACEYAHGVF and QYRTRLCKDEVGCARRICFFAHKPD.

In Oryza sativa subsp. japonica (Rice), this protein is Zinc finger CCCH domain-containing protein 33.